The sequence spans 748 residues: E3 ubiquitin-protein ligase SMURF2 (748 aa).

One can recognise a C2 domain in the interval 1–119 (MSNPGGRRNG…TGYQRLDLCK (119 aa)). Lys-119 participates in a covalent cross-link: Glycyl lysine isopeptide (Lys-Gly) (interchain with G-Cter in ubiquitin). WW domains lie at 157–190 (NDLP…RPTR), 251–284 (PDLP…DPRV), and 297–330 (GPLP…DPRL). The HECT domain maps to 414–748 (RPKDLWKRLM…IEETCGFAVE (335 aa)). Cys-716 acts as the Glycyl thioester intermediate in catalysis.

In terms of assembly, interacts (via WW domains) with SMAD1. Interacts (via WW domains) with SMAD2 (via PY-motif). Interacts (via WW domains) with SMAD3 (via PY-motif). Interacts with SMAD6. Interacts with SMAD7 (via PY-motif) and TGFBR1; SMAD7 recruits SMURF2 to the TGF-beta receptor and regulates its degradation. Does not interact with SMAD4; SMAD4 lacks a PY-motif. Interacts with AIMP1. Interacts with SNON. Interacts with STAMBP and RNF11. May interact with NDFIP1 and NDFIP2; this interaction induces the E3 ubiquitin-protein ligase activity. Interacts with TTC3. As to quaternary structure, (Microbial infection) Interacts (via WW domains) with EBOV and MARV VP40 (via PPXY motif); the interaction facilitates VP40 virus-like particle budding. In terms of processing, auto-ubiquitinated and ubiquitinated in the presence of RNF11 and UBE2D1. Ubiquitinated by the SCF(FBXL15) complex and TTC3, leading to its degradation by the proteasome. 'Lys-48'-linked polyubiquitination mediated by TRAF4 at Lys-119 leads to SMURF2 proteasomal degradation. As to expression, widely expressed.

The protein resides in the nucleus. It localises to the cytoplasm. It is found in the cell membrane. The protein localises to the membrane raft. The enzyme catalyses S-ubiquitinyl-[E2 ubiquitin-conjugating enzyme]-L-cysteine + [acceptor protein]-L-lysine = [E2 ubiquitin-conjugating enzyme]-L-cysteine + N(6)-ubiquitinyl-[acceptor protein]-L-lysine.. It functions in the pathway protein modification; protein ubiquitination. With respect to regulation, activated by NDFIP1- and NDFIP2-binding. E3 ubiquitin-protein ligase which accepts ubiquitin from an E2 ubiquitin-conjugating enzyme in the form of a thioester and then directly transfers the ubiquitin to targeted substrates. Interacts with SMAD7 to trigger SMAD7-mediated transforming growth factor beta/TGF-beta receptor ubiquitin-dependent degradation, thereby down-regulating TGF-beta signaling. In addition, interaction with SMAD7 activates autocatalytic degradation, which is prevented by interaction with AIMP1. Also forms a stable complex with TGF-beta receptor-mediated phosphorylated SMAD1, SMAD2 and SMAD3, and targets SMAD1 and SMAD2 for ubiquitination and proteasome-mediated degradation. SMAD2 may recruit substrates, such as SNON, for ubiquitin-dependent degradation. Negatively regulates TGFB1-induced epithelial-mesenchymal transition and myofibroblast differentiation. Functionally, (Microbial infection) In case of filoviruses Ebola/EBOV and Marburg/MARV infection, the complex formed by viral matrix protein VP40 and SMURF2 facilitates virus budding. The chain is E3 ubiquitin-protein ligase SMURF2 from Homo sapiens (Human).